The sequence spans 631 residues: Chaperone protein HtpG (631 aa).

The segment at 1–338 is a; substrate-binding; that stretch reads MILKEQETLG…CNDLPLNISR (338 aa). The b stretch occupies residues 339–554; the sequence is EMLQHNRITQ…SNNMTTHMAK (216 aa). The interval 555-631 is c; that stretch reads LIVASGQNKP…KLLNHDTIVN (77 aa).

It belongs to the heat shock protein 90 family. In terms of assembly, homodimer.

The protein resides in the cytoplasm. Its function is as follows. Molecular chaperone. Has ATPase activity. The sequence is that of Chaperone protein HtpG from Baumannia cicadellinicola subsp. Homalodisca coagulata.